Consider the following 698-residue polypeptide: Cytochrome c oxidase subunit 1 (698 aa).

Residues isoleucine 65 to isoleucine 85 form a helical membrane-spanning segment. Glutamate 88 is a binding site for Ca(2+). Fe(II)-heme a is bound at residue histidine 111. 8 helical membrane passes run leucine 113–isoleucine 133, leucine 147–phenylalanine 167, isoleucine 304–leucine 324, isoleucine 349–methionine 369, leucine 395–isoleucine 415, isoleucine 434–leucine 454, isoleucine 468–valine 488, and phenylalanine 498–leucine 518. Histidine 401 is a Cu cation binding site. The segment at residues histidine 401–tyrosine 405 is a cross-link (1'-histidyl-3'-tyrosine (His-Tyr)). Tyrosine 405 is a binding site for O2. Cu cation contacts are provided by histidine 450 and histidine 451. Mg(2+) is bound by residues histidine 528 and aspartate 529. Helical transmembrane passes span valine 533–phenylalanine 553, leucine 574–serine 594, and methionine 613–phenylalanine 633. Histidine 536 lines the heme a3 pocket. Histidine 538 provides a ligand contact to Fe(II)-heme a.

The protein belongs to the heme-copper respiratory oxidase family. In terms of assembly, component of the cytochrome c oxidase (complex IV, CIV), a multisubunit enzyme composed of a catalytic core of 3 subunits and several supernumerary subunits. The complex exists as a monomer or a dimer and forms supercomplexes (SCs) in the inner mitochondrial membrane with ubiquinol-cytochrome c oxidoreductase (cytochrome b-c1 complex, complex III, CIII). Heme is required as a cofactor. It depends on Cu cation as a cofactor.

The protein localises to the mitochondrion inner membrane. The catalysed reaction is 4 Fe(II)-[cytochrome c] + O2 + 8 H(+)(in) = 4 Fe(III)-[cytochrome c] + 2 H2O + 4 H(+)(out). It participates in energy metabolism; oxidative phosphorylation. In terms of biological role, component of the cytochrome c oxidase, the last enzyme in the mitochondrial electron transport chain which drives oxidative phosphorylation. The respiratory chain contains 3 multisubunit complexes succinate dehydrogenase (complex II, CII), ubiquinol-cytochrome c oxidoreductase (cytochrome b-c1 complex, complex III, CIII) and cytochrome c oxidase (complex IV, CIV), that cooperate to transfer electrons derived from NADH and succinate to molecular oxygen, creating an electrochemical gradient over the inner membrane that drives transmembrane transport and the ATP synthase. Cytochrome c oxidase is the component of the respiratory chain that catalyzes the reduction of oxygen to water. Electrons originating from reduced cytochrome c in the intermembrane space (IMS) are transferred via the dinuclear copper A center (CU(A)) of subunit 2 and heme A of subunit 1 to the active site in subunit 1, a binuclear center (BNC) formed by heme A3 and copper B (CU(B)). The BNC reduces molecular oxygen to 2 water molecules using 4 electrons from cytochrome c in the IMS and 4 protons from the mitochondrial matrix. The sequence is that of Cytochrome c oxidase subunit 1 (COI) from Tetrahymena pyriformis.